A 144-amino-acid polypeptide reads, in one-letter code: Large ribosomal subunit protein uL15 (144 aa).

The tract at residues 1–49 is disordered; the sequence is MKLNTLSPAAGAKSAAKRVGRGIGSGLGKTAGRGHKGQKSRSGGGVRVG. Over residues 21–31 the composition is skewed to gly residues; the sequence is RGIGSGLGKTA.

The protein belongs to the universal ribosomal protein uL15 family. As to quaternary structure, part of the 50S ribosomal subunit.

In terms of biological role, binds to the 23S rRNA. This Shewanella loihica (strain ATCC BAA-1088 / PV-4) protein is Large ribosomal subunit protein uL15.